Reading from the N-terminus, the 465-residue chain is Cysteine--tRNA ligase (465 aa).

Cysteine 27 is a binding site for Zn(2+). The 'HIGH' region signature appears at 29 to 39 (PTVYDDAHLGH). The segment at 153–173 (DISHKVSDDDTQSRVEHNSEK) is disordered. Zn(2+) is bound by residues cysteine 208, histidine 237, and glutamate 241. The 'KMSKS' region motif lies at 269-273 (KMSKS). Residue lysine 272 participates in ATP binding.

This sequence belongs to the class-I aminoacyl-tRNA synthetase family. Monomer. Zn(2+) serves as cofactor.

It localises to the cytoplasm. It carries out the reaction tRNA(Cys) + L-cysteine + ATP = L-cysteinyl-tRNA(Cys) + AMP + diphosphate. In Sulfurovum sp. (strain NBC37-1), this protein is Cysteine--tRNA ligase.